Here is a 356-residue protein sequence, read N- to C-terminus: Histidinol-phosphate aminotransferase (356 aa).

K214 bears the N6-(pyridoxal phosphate)lysine mark.

Belongs to the class-II pyridoxal-phosphate-dependent aminotransferase family. Histidinol-phosphate aminotransferase subfamily. Homodimer. The cofactor is pyridoxal 5'-phosphate.

It catalyses the reaction L-histidinol phosphate + 2-oxoglutarate = 3-(imidazol-4-yl)-2-oxopropyl phosphate + L-glutamate. It participates in amino-acid biosynthesis; L-histidine biosynthesis; L-histidine from 5-phospho-alpha-D-ribose 1-diphosphate: step 7/9. This Escherichia coli O9:H4 (strain HS) protein is Histidinol-phosphate aminotransferase.